We begin with the raw amino-acid sequence, 281 residues long: Ribonuclease HII (281 aa).

Residues 1–46 are disordered; it reads MIRDTKQPIKVPAKPASRSGGKAKTVKPKTIKPKTSAKAAAAKPAS. Residues 33–46 are compositionally biased toward low complexity; that stretch reads PKTSAKAAAAKPAS. The region spanning 73 to 261 is the RNase H type-2 domain; it reads WPIAGCDEAG…VAAAWQKIEG (189 aa). The a divalent metal cation site is built by Asp-79, Glu-80, and Asp-170.

This sequence belongs to the RNase HII family. The cofactor is Mn(2+). Requires Mg(2+) as cofactor.

The protein localises to the cytoplasm. The catalysed reaction is Endonucleolytic cleavage to 5'-phosphomonoester.. Its function is as follows. Endonuclease that specifically degrades the RNA of RNA-DNA hybrids. This Rhodopseudomonas palustris (strain TIE-1) protein is Ribonuclease HII.